We begin with the raw amino-acid sequence, 193 residues long: Acyl carrier protein phosphodiesterase (193 aa).

The protein belongs to the AcpH family.

It carries out the reaction holo-[ACP] + H2O = apo-[ACP] + (R)-4'-phosphopantetheine + H(+). Its function is as follows. Converts holo-ACP to apo-ACP by hydrolytic cleavage of the phosphopantetheine prosthetic group from ACP. The chain is Acyl carrier protein phosphodiesterase from Salmonella choleraesuis (strain SC-B67).